Consider the following 393-residue polypeptide: Nuclear speckle splicing regulatory protein 1 homolog (393 aa).

The disordered stretch occupies residues Met-1–Val-49. Residues Ala-39–Ser-48 show a composition bias toward low complexity. Positions Asn-76–Ala-166 form a coiled coil. The disordered stretch occupies residues Leu-187 to Arg-350. Residues Lys-199–Arg-209 show a composition bias toward basic residues. Basic and acidic residues-rich tracts occupy residues Glu-222–Tyr-236, Asp-243–Leu-261, Asp-317–Glu-333, and Ser-341–Arg-350.

This sequence belongs to the NSRP1 family.

This chain is Nuclear speckle splicing regulatory protein 1 homolog, found in Caenorhabditis briggsae.